The primary structure comprises 275 residues: Vitamin B12-binding protein (275 aa).

Residues 1 to 19 (MMNKLCFALPLIFSDASFA) form the signal peptide. Residues 25–272 (RIISLAPHST…EVCEHFETVR (248 aa)) enclose the Fe/B12 periplasmic-binding domain. Cys185 and Cys265 are disulfide-bonded.

Belongs to the BtuF family. As to quaternary structure, the complex is composed of two ATP-binding proteins (BtuD), two transmembrane proteins (BtuC) and a solute-binding protein (BtuF).

The protein localises to the periplasm. Its function is as follows. Part of the ABC transporter complex BtuCDF involved in vitamin B12 import. Binds vitamin B12 and delivers it to the periplasmic surface of BtuC. The sequence is that of Vitamin B12-binding protein from Vibrio campbellii (strain ATCC BAA-1116).